A 134-amino-acid chain; its full sequence is Methylglyoxal synthase (134 aa).

An MGS-like domain is found at 1–134 (MKIALIAHDR…DWRLIQERRN (134 aa)). Residues His-8, Lys-12, 34–37 (TGTT), and 54–55 (SG) contribute to the substrate site. Asp-60 acts as the Proton donor/acceptor in catalysis. Residue His-87 coordinates substrate.

Belongs to the methylglyoxal synthase family.

It catalyses the reaction dihydroxyacetone phosphate = methylglyoxal + phosphate. Its function is as follows. Catalyzes the formation of methylglyoxal from dihydroxyacetone phosphate. The protein is Methylglyoxal synthase of Lysinibacillus sphaericus (strain C3-41).